The primary structure comprises 542 residues: Protein MGF 505-11L (542 aa).

Belongs to the asfivirus MGF 505 family.

In terms of biological role, plays a role in virus cell tropism, and may be required for efficient virus replication in macrophages. In African swine fever virus (isolate Warthog/Namibia/Wart80/1980) (ASFV), this protein is Protein MGF 505-11L.